Here is a 259-residue protein sequence, read N- to C-terminus: Deoxyribose-phosphate aldolase (259 aa).

The Proton donor/acceptor role is filled by D102. K167 acts as the Schiff-base intermediate with acetaldehyde in catalysis. K201 (proton donor/acceptor) is an active-site residue.

Belongs to the DeoC/FbaB aldolase family. DeoC type 2 subfamily.

It localises to the cytoplasm. The enzyme catalyses 2-deoxy-D-ribose 5-phosphate = D-glyceraldehyde 3-phosphate + acetaldehyde. It participates in carbohydrate degradation; 2-deoxy-D-ribose 1-phosphate degradation; D-glyceraldehyde 3-phosphate and acetaldehyde from 2-deoxy-alpha-D-ribose 1-phosphate: step 2/2. Its function is as follows. Catalyzes a reversible aldol reaction between acetaldehyde and D-glyceraldehyde 3-phosphate to generate 2-deoxy-D-ribose 5-phosphate. In Salmonella dublin (strain CT_02021853), this protein is Deoxyribose-phosphate aldolase.